A 509-amino-acid polypeptide reads, in one-letter code: Maturase K (509 aa).

It belongs to the intron maturase 2 family. MatK subfamily.

Its subcellular location is the plastid. The protein localises to the chloroplast. Usually encoded in the trnK tRNA gene intron. Probably assists in splicing its own and other chloroplast group II introns. The sequence is that of Maturase K from Abies firma (Momi fir).